The following is a 558-amino-acid chain: FRIGIDA-like protein 3 (558 aa).

Positions 9-102 (SLMDSTSSKI…ALERLQKKRD (94 aa)) form a coiled coil. Basic and acidic residues predominate over residues 454 to 463 (AKADKKRATE). The tract at residues 454-494 (AKADKKRATEPMKPQPKRPRGAQPRVTDNNNNINNNKTGYG) is disordered.

The protein belongs to the Frigida family.

This chain is FRIGIDA-like protein 3 (FRL3), found in Arabidopsis thaliana (Mouse-ear cress).